Here is a 1755-residue protein sequence, read N- to C-terminus: Transposon Ty1-GR3 Gag-Pol polyprotein (1755 aa).

Polar residues-rich tracts occupy residues 1–10 (MESQQLSNYP), 48–60 (TKAN…TPAS), and 127–152 (QSQF…GNTF). Disordered stretches follow at residues 1-93 (MESQ…MMTQ), 126-173 (PQSQ…RPPP), and 352-421 (GSRN…SKST). A compositionally biased stretch (low complexity) spans 153 to 165 (TDSSSADSDMTST). The tract at residues 299 to 401 (NNGIHINNKV…NSKSKTARAH (103 aa)) is RNA-binding. Positions 402-418 (NVSTSNNSPSTDNDSIS) are enriched in low complexity. S416 carries the phosphoserine modification. Catalysis depends on D461, which acts as the For protease activity; shared with dimeric partner. Residues 583–640 (NVHTSESTRKYPYPFIHRMLAHANAQTIRYSLKNNTITYFNESDVDWSSAIDYQCPDC) are integrase-type zinc finger-like. Residues 660–835 (NSYEPFQYLH…AGLDISTLLP (176 aa)) form the Integrase catalytic domain. D671 and D736 together coordinate Mg(2+). A disordered region spans residues 956 to 1172 (SKAVSPTDST…LGGIGDSNAY (217 aa)). Positions 960–969 (SPTDSTPPST) are enriched in low complexity. Polar residues-rich tracts occupy residues 1005-1015 (STPQISNIEST) and 1031-1043 (MSQS…SYAS). A compositionally biased stretch (basic and acidic residues) spans 1044 to 1053 (KSKDFRHSDS). 2 stretches are compositionally biased toward polar residues: residues 1054 to 1082 (YSDN…QTSE) and 1095 to 1106 (SIDTSSSESNSL). Residues 1178–1212 (KKRSLEDNETEIKVSRDTWNTKNMRSLEPPRSKKR) carry the Bipartite nuclear localization signal motif. The region spanning 1338 to 1476 (NNYYITQLDI…DILGLEIKYQ (139 aa)) is the Reverse transcriptase Ty1/copia-type domain. 6 residues coordinate Mg(2+): D1346, D1427, D1428, D1610, E1652, and D1685. The region spanning 1610-1752 (DASYGNQPYY…IKTFKLLTNK (143 aa)) is the RNase H Ty1/copia-type domain.

The capsid protein forms a homotrimer, from which the VLPs are assembled. The protease is a homodimer, whose active site consists of two apposed aspartic acid residues. Initially, virus-like particles (VLPs) are composed of the structural unprocessed proteins Gag and Gag-Pol, and also contain the host initiator methionine tRNA (tRNA(i)-Met) which serves as a primer for minus-strand DNA synthesis, and a dimer of genomic Ty RNA. Processing of the polyproteins occurs within the particle and proceeds by an ordered pathway, called maturation. First, the protease (PR) is released by autocatalytic cleavage of the Gag-Pol polyprotein yielding capsid protein p45 and a Pol-p154 precursor protein. This cleavage is a prerequisite for subsequent processing of Pol-p154 at the remaining sites to release the mature structural and catalytic proteins. Maturation takes place prior to the RT reaction and is required to produce transposition-competent VLPs.

It is found in the cytoplasm. The protein localises to the nucleus. It carries out the reaction DNA(n) + a 2'-deoxyribonucleoside 5'-triphosphate = DNA(n+1) + diphosphate. The enzyme catalyses Endonucleolytic cleavage to 5'-phosphomonoester.. In terms of biological role, capsid protein (CA) is the structural component of the virus-like particle (VLP), forming the shell that encapsulates the retrotransposons dimeric RNA genome. The particles are assembled from trimer-clustered units and there are holes in the capsid shells that allow for the diffusion of macromolecules. CA also has nucleocapsid-like chaperone activity, promoting primer tRNA(i)-Met annealing to the multipartite primer-binding site (PBS), dimerization of Ty1 RNA and initiation of reverse transcription. Functionally, the aspartyl protease (PR) mediates the proteolytic cleavages of the Gag and Gag-Pol polyproteins after assembly of the VLP. Its function is as follows. Reverse transcriptase/ribonuclease H (RT) is a multifunctional enzyme that catalyzes the conversion of the retro-elements RNA genome into dsDNA within the VLP. The enzyme displays a DNA polymerase activity that can copy either DNA or RNA templates, and a ribonuclease H (RNase H) activity that cleaves the RNA strand of RNA-DNA heteroduplexes during plus-strand synthesis and hydrolyzes RNA primers. The conversion leads to a linear dsDNA copy of the retrotransposon that includes long terminal repeats (LTRs) at both ends. Integrase (IN) targets the VLP to the nucleus, where a subparticle preintegration complex (PIC) containing at least integrase and the newly synthesized dsDNA copy of the retrotransposon must transit the nuclear membrane. Once in the nucleus, integrase performs the integration of the dsDNA into the host genome. This chain is Transposon Ty1-GR3 Gag-Pol polyprotein (TY1B-GR3), found in Saccharomyces cerevisiae (strain ATCC 204508 / S288c) (Baker's yeast).